Consider the following 789-residue polypeptide: MRFTLSWLMQYLDTDASLDFIISKLSDIGLEVDSVDCKKHLQSFVVVEVIDVVPHHAADKLKVCQVYDGVQTFQVVCGASNVKVGMKSVLAYVGSVIPKNQTVIKVAKLRGVDSYGMLCSRDELGITENDSTDEGIIELSDNTYNVGESFFSCDPVIELNITPNRGDCLGVYGIARDLAAAGVGKLKSVNFCDITFDNTCYISPIEICLEVQGVVKGVYIKGIRNCETPKWLKEYLFSCGVKSISCVVDIINYIMLSFNRPLHIYDADKIAGKLVFRKIDDQIEFFALNDKKYLLGKENIIAVDLANRIHSIVGVIGSEYSKCLFDTENIFLECAWFDPVDIALSSRKIKLSTDSSYRLERFVDPEFLQDGLKLATKMILEYCGGSPSSIVSVQNYVHNDILLNFSPDSVRNIGSVSITRDEIFDFLCNIGCVVKNHDCDIWIVIPPSWRSDLKHSFDLVEEVLRLYGYDKILENPIPISNIEFPDNLHNKLRSVLLSQGMMEVVTWSFTNLEFAKKFGYDSDIMLIDNPINNNMNLMRPSVLLNLLQVISENQAYGNNDAAIFEIGQIYNINSVCGDNNYVVSGVRYGDNLPRNFYKTDRSVDIFDVKSDFFKVLQEMNIGYDSVDLVRSTKSYLHPMKSADVYFNNILIGYFGELHPSIVHLYEIKRPIVCFEVFLYKIPVVDLTRKEFVELRYQSVKRDFAFLVSKNVNIQCLIEVAKKTNVQLIEDVSIFDIYEGNGIDKGMLSVALSVTFRSVDHTLNDQEIKDASDLIISAISKGFNGILRSC.

The 114-residue stretch at 38-151 folds into the tRNA-binding domain; sequence KKHLQSFVVV…NTYNVGESFF (114 aa). The 77-residue stretch at 398–474 folds into the B5 domain; it reads HNDILLNFSP…RLYGYDKILE (77 aa). Asp-452, Asp-458, Glu-461, and Glu-462 together coordinate Mg(2+). The region spanning 694 to 787 is the FDX-ACB domain; it reads LRYQSVKRDF…ISKGFNGILR (94 aa).

Belongs to the phenylalanyl-tRNA synthetase beta subunit family. Type 1 subfamily. In terms of assembly, tetramer of two alpha and two beta subunits. It depends on Mg(2+) as a cofactor.

The protein localises to the cytoplasm. The enzyme catalyses tRNA(Phe) + L-phenylalanine + ATP = L-phenylalanyl-tRNA(Phe) + AMP + diphosphate + H(+). This chain is Phenylalanine--tRNA ligase beta subunit, found in Ehrlichia ruminantium (strain Gardel).